Consider the following 458-residue polypeptide: Ribosomal protein uS12 methylthiotransferase RimO (458 aa).

Positions 8 to 119 (PTVAFAHLGC…IVDVLQRVEV (112 aa)) constitute an MTTase N-terminal domain. Positions 17, 53, 82, 157, 161, and 164 each coordinate [4Fe-4S] cluster. The Radical SAM core domain maps to 143-372 (TTDQAVAFLK…MALQQPISAE (230 aa)). The TRAM domain occupies 375–446 (SRWVGRTVDV…IYDLNGQMVG (72 aa)).

This sequence belongs to the methylthiotransferase family. RimO subfamily. The cofactor is [4Fe-4S] cluster.

The protein resides in the cytoplasm. It catalyses the reaction L-aspartate(89)-[ribosomal protein uS12]-hydrogen + (sulfur carrier)-SH + AH2 + 2 S-adenosyl-L-methionine = 3-methylsulfanyl-L-aspartate(89)-[ribosomal protein uS12]-hydrogen + (sulfur carrier)-H + 5'-deoxyadenosine + L-methionine + A + S-adenosyl-L-homocysteine + 2 H(+). Catalyzes the methylthiolation of an aspartic acid residue of ribosomal protein uS12. The sequence is that of Ribosomal protein uS12 methylthiotransferase RimO from Synechococcus sp. (strain CC9605).